Reading from the N-terminus, the 96-residue chain is ESAT-6-like protein EsxR (96 aa).

It belongs to the WXG100 family. ESAT-6 subfamily.

Its subcellular location is the secreted. In Mycobacterium bovis (strain ATCC BAA-935 / AF2122/97), this protein is ESAT-6-like protein EsxR.